Here is a 241-residue protein sequence, read N- to C-terminus: Uridylate kinase (241 aa).

12 to 15 (KISG) is a binding site for ATP. The tract at residues 20 to 25 (GDKGNG) is involved in allosteric activation by GTP. Position 54 (G54) interacts with UMP. 2 residues coordinate ATP: G55 and R59. Residues D74 and 135 to 142 (TGNPYFST) contribute to the UMP site. Residues N163, Y169, and D172 each coordinate ATP.

Belongs to the UMP kinase family. Homohexamer.

The protein localises to the cytoplasm. It catalyses the reaction UMP + ATP = UDP + ADP. It participates in pyrimidine metabolism; CTP biosynthesis via de novo pathway; UDP from UMP (UMPK route): step 1/1. Allosterically activated by GTP. Inhibited by UTP. Functionally, catalyzes the reversible phosphorylation of UMP to UDP. This Lactobacillus helveticus (strain DPC 4571) protein is Uridylate kinase.